Here is a 399-residue protein sequence, read N- to C-terminus: MAATTAAVVAEEDTELRDLLVQTLENSGVLNRIKAELRAAVFLALEEQEKVENKTPLVNESLKKFLNTKDGRLVASLVAEFLQFFNLDFTLAVFHPETSTIQGLEGRENLARDLGIIEAEGTVGGPLLLEVIRRCQQKEKGPTSVEGALDLSDGHPPSKSPEGKTSVNSTPSKIPRYKGQGKKKTSGQKSGDKKTSSETSQSEPSVSLSESKSKSSLHSLVHETRIASFLSNSTVDAKDKSALCPDEDDVEGDSFFDDPIPKPEKTYGWRSEPRKQVGGLASLSDKPHLRSGLSSLAGAPSLTDAESKRGSTVLKDLKLVGEKIGSLGLGSGEDEDYVDDFNSASHRSEKSELSIGEEIEEDLSMGVEDVNTSDKLDDLTQDLTVSQLSDVADYLEDVA.

In terms of domain architecture, LisH spans 70–102 (DGRLVASLVAEFLQFFNLDFTLAVFHPETSTIQ). Residues 139–217 (EKGPTSVEGA…LSESKSKSSL (79 aa)) are disordered. A Phosphothreonine modification is found at Thr143. Residues Ser152 and Ser160 each carry the phosphoserine modification. The span at 163–172 (GKTSVNSTPS) shows a compositional bias: polar residues. Thr170 carries the post-translational modification Phosphothreonine. A compositionally biased stretch (basic residues) spans 175 to 186 (PRYKGQGKKKTS). Positions 197–217 (SETSQSEPSVSLSESKSKSSL) are enriched in low complexity. Ser202 carries the phosphoserine modification. Thr234 is modified (phosphothreonine). Residues 239-309 (DKSALCPDED…PSLTDAESKR (71 aa)) are disordered. Positions 245–256 (PDEDDVEGDSFF) are enriched in acidic residues. Positions 259-275 (PIPKPEKTYGWRSEPRK) are enriched in basic and acidic residues. Low complexity predominate over residues 290 to 302 (RSGLSSLAGAPSL). Ser301, Ser326, and Ser331 each carry phosphoserine. The disordered stretch occupies residues 328 to 357 (GLGSGEDEDYVDDFNSASHRSEKSELSIGE). Tyr337 is modified (phosphotyrosine).

The protein belongs to the CEP43 family. In terms of assembly, homodimer. Part of a ternary complex that contains CEP350, CEP43 and MAPRE1. Interacts directly with CEP350 and MAPRE1. Interacts with CEP19. Interacts (via N-terminus) with CEP350 (via C-terminus).

It localises to the cytoplasm. It is found in the cytoskeleton. The protein resides in the microtubule organizing center. The protein localises to the centrosome. Its subcellular location is the centriole. It localises to the cilium basal body. Required for anchoring microtubules to the centrosomes. Required for ciliation. This chain is Centrosomal protein 43 (Cep43), found in Rattus norvegicus (Rat).